A 283-amino-acid chain; its full sequence is Phosphatidylglycerol--prolipoprotein diacylglyceryl transferase (283 aa).

3 helical membrane-spanning segments follow: residues 14–34 (LGPL…ALFL), 56–76 (MLMY…VLFY), and 88–108 (IFMV…VLIA). Arg-139 lines the a 1,2-diacyl-sn-glycero-3-phospho-(1'-sn-glycerol) pocket. The helical transmembrane segment at 258-278 (MGQWLSLPMIVIGVALLVFFG) threads the bilayer.

It belongs to the Lgt family.

The protein localises to the cell inner membrane. The enzyme catalyses L-cysteinyl-[prolipoprotein] + a 1,2-diacyl-sn-glycero-3-phospho-(1'-sn-glycerol) = an S-1,2-diacyl-sn-glyceryl-L-cysteinyl-[prolipoprotein] + sn-glycerol 1-phosphate + H(+). It participates in protein modification; lipoprotein biosynthesis (diacylglyceryl transfer). Its function is as follows. Catalyzes the transfer of the diacylglyceryl group from phosphatidylglycerol to the sulfhydryl group of the N-terminal cysteine of a prolipoprotein, the first step in the formation of mature lipoproteins. The protein is Phosphatidylglycerol--prolipoprotein diacylglyceryl transferase of Chromobacterium violaceum (strain ATCC 12472 / DSM 30191 / JCM 1249 / CCUG 213 / NBRC 12614 / NCIMB 9131 / NCTC 9757 / MK).